Here is a 355-residue protein sequence, read N- to C-terminus: Methyltransferase FUS9 (355 aa).

S-adenosyl-L-homocysteine is bound by residues Tyr-18, Asn-63, Asp-86, Ser-123, and Phe-124. Mg(2+) is bound at residue Phe-231.

It belongs to the methyltransferase superfamily. Type-7 methyltransferase family. Mg(2+) is required as a cofactor.

It functions in the pathway mycotoxin biosynthesis. In terms of biological role, methyltransferase; part of the gene cluster that mediates the biosynthesis of the mycotoxin fusarin C. Within the cluster, FUS1, FUS2, FUS8 and FUS9 are sufficient for fusarin production. The roles of the other FUS members are yet undetermined. The fusarin C synthetase FUS1 is responsible for the condensation of one acetyl-coenzyme A (CoA) unit with six malonyl-CoA units and the amide linkage of the arising heptaketide and homoserine, subsequently releasing the first intermediate, prefusarin, as an alcohol with an open ring structure. The cytochrome P450 monooxygenase FUS8 participates in multiple oxidation processes at carbon C-20 and is able to use the FUS1 product as substrate, resulting in formation of 20-hydroxy-prefusarin. This reaction seems to be essential before the 2-pyrrolidone ring closure can be catalyzed by FUS2, generating 20-hydroxy-fusarin. FUS8 is able to further oxidizes carbon C-20 after ring closure, resulting in the formation of carboxy-fusarin C. As the last step, FUS9 methylates the hydroxyl group at C-21 to generate fusarin C. Fusarin C can then rearrange to epi-fusarin C, the (z)-isomers, and fusarin A and fusarin D. In Gibberella fujikuroi (strain CBS 195.34 / IMI 58289 / NRRL A-6831) (Bakanae and foot rot disease fungus), this protein is Methyltransferase FUS9.